The sequence spans 407 residues: MGCLCLYRSTLLTGGLLFLLMLADPAFPAGSRPPVVLVPGDMGNQLEAKLDKPSVVHYVCSKRTDHYFTLWLNLELLLPVIIDCWIDNVRLIYNQTSHTTQFPEGVDVRVPGFGDTFSMEFLDPSKSSVGSYLHTMVESLVSWGYERGKDVRGAPYDWRRAPNENGPYFLALRKMIEEMYQLYGGPVVLVAHSMGNMYMLYFLQHQPQDWKDKYIRAFVALGPPWGGVPKTLRVLASGDNNRIPVIRSLKIRAQQRSAVSTTWLLPYSYTWSPQKVFVRTPKANYTLQDYRQFFQDIGFKDGWSMRQDTEGLVEATVPPGVRLHCLYGTGVPTPESFDYESFPDRDPKIHYGTGDGTVNLQSALHCHTWRGLQKQEVSLQALPGNEHIAMLANTTTLAYLKRVLLGP.

Positions 1-29 are cleaved as a signal peptide; that stretch reads MGCLCLYRSTLLTGGLLFLLMLADPAFPA. Asp41 is a binding site for substrate. Residues Cys60 and Cys84 are joined by a disulfide bond. N-linked (GlcNAc...) asparagine glycosylation is present at Asn94. The Acyl-ester intermediate role is filled by Ser193. Position 193 (Ser193) interacts with Zn(2+). Met194 provides a ligand contact to substrate. N-linked (GlcNAc...) asparagine glycosylation is present at Asn284. Residues Asp355 and His387 each act as charge relay system in the active site. His387 contacts Zn(2+). An N-linked (GlcNAc...) asparagine glycan is attached at Asn393.

It belongs to the AB hydrolase superfamily. Lipase family. Post-translationally, N-glycosylated. N-glycosylated. N-glycosylation is important for maturation of the enzyme and normal subcellular location. As to expression, detected in brain (at protein level).

It localises to the lysosome. The protein resides in the secreted. The protein localises to the membrane. The enzyme catalyses a 1,2-diacyl-sn-glycero-3-phosphocholine + H2O = a 2-acyl-sn-glycero-3-phosphocholine + a fatty acid + H(+). The catalysed reaction is 1-hexadecanoyl-2-(9Z-octadecenoyl)-sn-glycero-3-phosphocholine + H2O = 2-(9Z-octadecenoyl)-sn-glycero-3-phosphocholine + hexadecanoate + H(+). It carries out the reaction 1,2-di-(9Z-octadecenoyl)-sn-glycero-3-phosphocholine + H2O = 2-(9Z-octadecenoyl)-sn-glycero-3-phosphocholine + (9Z)-octadecenoate + H(+). It catalyses the reaction 1-hexadecanoyl-2-glutaroyl-sn-glycero-3-phosphocholine + H2O = 2-glutaroyl-sn-glycero-3-phosphocholine + hexadecanoate + H(+). The enzyme catalyses 1-hexadecanoyl-2-nonadioyl-sn-glycero-3-phosphocholine + H2O = 2-nonadioyl-sn-glycero-3-phosphocholine + hexadecanoate + H(+). The catalysed reaction is 1-hexadecanoyl-2-(5-oxopentanoyl)-sn-glycero-3-phosphocholine + H2O = 2-(5-oxopentanoyl)-sn-glycero-3-phosphocholine + hexadecanoate + H(+). It carries out the reaction 1-hexadecanoyl-2-(9-oxononanoyl)-sn-glycero-3-phosphocholine + H2O = 2-(9-oxononanoyl)-sn-glycero-3-phosphocholine + hexadecanoate + H(+). It catalyses the reaction 1,2-dihexadecanoyl-sn-glycero-3-phosphocholine + H2O = 2-hexadecanoyl-sn-glycero-3-phosphocholine + hexadecanoate + H(+). The enzyme catalyses a 1,2-diacyl-sn-glycero-3-phosphocholine + H2O = a 1-acyl-sn-glycero-3-phosphocholine + a fatty acid + H(+). The catalysed reaction is 1-hexadecanoyl-2-(9Z-octadecenoyl)-sn-glycero-3-phosphocholine + H2O = 1-hexadecanoyl-sn-glycero-3-phosphocholine + (9Z)-octadecenoate + H(+). It carries out the reaction 1,2-di-(9Z-octadecenoyl)-sn-glycero-3-phosphocholine + H2O = 1-(9Z-octadecenoyl)-sn-glycero-3-phosphocholine + (9Z)-octadecenoate + H(+). It catalyses the reaction 1,2-dihexadecanoyl-sn-glycero-3-phosphocholine + H2O = 1-hexadecanoyl-sn-glycero-3-phosphocholine + hexadecanoate + H(+). The enzyme catalyses a 1-acyl-sn-glycero-3-phosphocholine + H2O = sn-glycerol 3-phosphocholine + a fatty acid + H(+). The catalysed reaction is 1-hexadecanoyl-sn-glycero-3-phosphocholine + H2O = sn-glycerol 3-phosphocholine + hexadecanoate + H(+). It carries out the reaction N-(acetyl)-sphing-4-enine + a 1,2-diacyl-sn-glycero-3-phosphoethanolamine = 1-O-acyl-N-(acetyl)-sphing-4-enine + a 2-acyl-sn-glycero-3-phosphoethanolamine. It catalyses the reaction 1-hexadecanoyl-2-(9Z-octadecenoyl)-sn-glycero-3-phosphoethanolamine + N-(acetyl)-sphing-4-enine = 2-(9Z-octadecenoyl)-sn-glycero-3-phosphoethanolamine + 1-hexadecanoyl-N-(acetyl)-sphing-4-enine. The enzyme catalyses 1-hexadecanoyl-2-(9Z,12Z-octadecadienoyl)-sn-glycero-3-phosphoethanolamine + N-(acetyl)-sphing-4-enine = 2-(9Z,12Z)-octadecadienoyl-sn-glycero-3-phosphoethanolamine + 1-hexadecanoyl-N-(acetyl)-sphing-4-enine. The catalysed reaction is 1-hexadecanoyl-2-(5Z,8Z,11Z,14Z-eicosatetraenoyl)-sn-glycero-3-phosphoethanolamine + N-(acetyl)-sphing-4-enine = 2-(5Z,8Z,11Z,14Z)-eicosatetraenoyl-sn-glycero-3-phosphoethanolamine + 1-hexadecanoyl-N-(acetyl)-sphing-4-enine. It carries out the reaction N-(acetyl)-sphing-4-enine + a 1,2-diacyl-sn-glycero-3-phosphoethanolamine = 1-O-acyl-N-(acetyl)-sphing-4-enine + a 1-acyl-sn-glycero-3-phosphoethanolamine. It catalyses the reaction 1-hexadecanoyl-2-(9Z-octadecenoyl)-sn-glycero-3-phosphoethanolamine + N-(acetyl)-sphing-4-enine = 1-(9Z-octadecenoyl)-N-(acetyl)-sphing-4-enine + 1-hexadecanoyl-sn-glycero-3-phosphoethanolamine. The enzyme catalyses 1-hexadecanoyl-2-(9Z,12Z-octadecadienoyl)-sn-glycero-3-phosphoethanolamine + N-(acetyl)-sphing-4-enine = 1-(9Z,12Z-octadecadienoyl)-N-acetylsphing-4-enine + 1-hexadecanoyl-sn-glycero-3-phosphoethanolamine. The catalysed reaction is 1-hexadecanoyl-2-(5Z,8Z,11Z,14Z-eicosatetraenoyl)-sn-glycero-3-phosphoethanolamine + N-(acetyl)-sphing-4-enine = 1-(5Z,8Z,11Z,14Z)-eicosatetraenoyl-N-(acetyl)-sphing-4-enine + 1-hexadecanoyl-sn-glycero-3-phosphoethanolamine. It carries out the reaction N-(acetyl)-sphing-4-enine + a 1,2-diacyl-sn-glycero-3-phosphocholine = 1-O-acyl-N-(acetyl)-sphing-4-enine + a 2-acyl-sn-glycero-3-phosphocholine. It catalyses the reaction 1-hexadecanoyl-2-(9Z-octadecenoyl)-sn-glycero-3-phosphocholine + N-(acetyl)-sphing-4-enine = 1-hexadecanoyl-N-(acetyl)-sphing-4-enine + 2-(9Z-octadecenoyl)-sn-glycero-3-phosphocholine. The enzyme catalyses 1-hexadecanoyl-2-(9Z,12Z-octadecadienoyl)-sn-glycero-3-phosphocholine + N-(acetyl)-sphing-4-enine = 2-(9Z,12Z-octadecadienoyl)-sn-glycero-3-phosphocholine + 1-hexadecanoyl-N-(acetyl)-sphing-4-enine. The catalysed reaction is 1-hexadecanoyl-2-(5Z,8Z,11Z,14Z-eicosatetraenoyl)-sn-glycero-3-phosphocholine + N-(acetyl)-sphing-4-enine = 1-hexadecanoyl-N-(acetyl)-sphing-4-enine + 2-(5Z,8Z,11Z,14Z)-eicosatetraenoyl-sn-glycero-3-phosphocholine. It carries out the reaction 1-hexadecanoyl-2-(4Z,7Z,10Z,13Z,16Z,19Z-docosahexaenoyl)-sn-glycero-3-phosphocholine + N-(acetyl)-sphing-4-enine = 2-(4Z,7Z,10Z,13Z,16Z,19Z-docosahexaenoyl)-sn-glycero-3-phosphocholine + 1-hexadecanoyl-N-(acetyl)-sphing-4-enine. It catalyses the reaction 1-hexadecanoyl-2-nonadioyl-sn-glycero-3-phosphocholine + N-(acetyl)-sphing-4-enine = 2-nonadioyl-sn-glycero-3-phosphocholine + 1-hexadecanoyl-N-(acetyl)-sphing-4-enine. The enzyme catalyses 1-octadecanoyl-2-(9Z-octadecenoyl)-sn-glycero-3-phosphocholine + N-(acetyl)-sphing-4-enine = 1-octadecanoyl-N-(acetyl)-sphing-4-enine + 2-(9Z-octadecenoyl)-sn-glycero-3-phosphocholine. The catalysed reaction is 1-(9Z)-octadecenoyl-2-octadecanoyl-sn-glycero-3-phosphocholine + N-(acetyl)-sphing-4-enine = 2-octadecanoyl-sn-glycero-3-phosphocholine + 1-(9Z-octadecenoyl)-N-(acetyl)-sphing-4-enine. It carries out the reaction 1-octadecanoyl-2-(5Z,8Z,11Z,14Z-eicosatetraenoyl)-sn-glycero-3-phosphocholine + N-(acetyl)-sphing-4-enine = 1-octadecanoyl-N-(acetyl)-sphing-4-enine + 2-(5Z,8Z,11Z,14Z)-eicosatetraenoyl-sn-glycero-3-phosphocholine. It catalyses the reaction 1-(9Z-octadecenoyl)-2-hexadecanoyl-sn-glycero-3-phosphocholine + N-(acetyl)-sphing-4-enine = 1-(9Z-octadecenoyl)-N-(acetyl)-sphing-4-enine + 2-hexadecanoyl-sn-glycero-3-phosphocholine. The enzyme catalyses N-(acetyl)-sphing-4-enine + a 1,2-diacyl-sn-glycero-3-phosphocholine = 1-O-acyl-N-(acetyl)-sphing-4-enine + a 1-acyl-sn-glycero-3-phosphocholine. The catalysed reaction is 1-hexadecanoyl-2-(9Z-octadecenoyl)-sn-glycero-3-phosphocholine + N-(acetyl)-sphing-4-enine = 1-(9Z-octadecenoyl)-N-(acetyl)-sphing-4-enine + 1-hexadecanoyl-sn-glycero-3-phosphocholine. It carries out the reaction 1-hexadecanoyl-2-(9Z,12Z-octadecadienoyl)-sn-glycero-3-phosphocholine + N-(acetyl)-sphing-4-enine = 1-(9Z,12Z-octadecadienoyl)-N-acetylsphing-4-enine + 1-hexadecanoyl-sn-glycero-3-phosphocholine. It catalyses the reaction 1-hexadecanoyl-2-(5Z,8Z,11Z,14Z-eicosatetraenoyl)-sn-glycero-3-phosphocholine + N-(acetyl)-sphing-4-enine = 1-(5Z,8Z,11Z,14Z)-eicosatetraenoyl-N-(acetyl)-sphing-4-enine + 1-hexadecanoyl-sn-glycero-3-phosphocholine. The enzyme catalyses 1-hexadecanoyl-2-(4Z,7Z,10Z,13Z,16Z,19Z-docosahexaenoyl)-sn-glycero-3-phosphocholine + N-(acetyl)-sphing-4-enine = 1-(4Z,7Z,10Z,13Z,16Z,19Z-docosahexaenoyl)-N-(acetyl)-sphing-4-enine + 1-hexadecanoyl-sn-glycero-3-phosphocholine. The catalysed reaction is 1-octadecanoyl-2-(9Z-octadecenoyl)-sn-glycero-3-phosphocholine + N-(acetyl)-sphing-4-enine = 1-(9Z-octadecenoyl)-N-(acetyl)-sphing-4-enine + 1-octadecanoyl-sn-glycero-3-phosphocholine. It carries out the reaction 1-octadecanoyl-2-(9Z,12Z)-octadecadienoyl-sn-glycero-3-phosphocholine + N-(acetyl)-sphing-4-enine = 1-(9Z,12Z-octadecadienoyl)-N-acetylsphing-4-enine + 1-octadecanoyl-sn-glycero-3-phosphocholine. It catalyses the reaction 1-(9Z-octadecenoyl)-2-hexadecanoyl-sn-glycero-3-phosphocholine + N-(acetyl)-sphing-4-enine = 1-hexadecanoyl-N-(acetyl)-sphing-4-enine + 1-(9Z-octadecenoyl)-sn-glycero-3-phosphocholine. The enzyme catalyses 1-(9Z)-octadecenoyl-2-octadecanoyl-sn-glycero-3-phosphocholine + N-(acetyl)-sphing-4-enine = 1-octadecanoyl-N-(acetyl)-sphing-4-enine + 1-(9Z-octadecenoyl)-sn-glycero-3-phosphocholine. The catalysed reaction is 1,2-di-(9Z-octadecenoyl)-sn-glycero-3-phosphocholine + N-(acetyl)-sphing-4-enine = 1-(9Z-octadecenoyl)-N-(acetyl)-sphing-4-enine + 1-(9Z-octadecenoyl)-sn-glycero-3-phosphocholine. It carries out the reaction 1-octadecanoyl-2-(5Z,8Z,11Z,14Z-eicosatetraenoyl)-sn-glycero-3-phosphocholine + N-(acetyl)-sphing-4-enine = 1-(5Z,8Z,11Z,14Z)-eicosatetraenoyl-N-(acetyl)-sphing-4-enine + 1-octadecanoyl-sn-glycero-3-phosphocholine. It catalyses the reaction a 1,2-diacyl-sn-glycero-3-phospho-L-serine + N-(acetyl)-sphing-4-enine = a 2-acyl-sn-glycero-3-phospho-L-serine + 1-O-acyl-N-(acetyl)-sphing-4-enine. The enzyme catalyses 1-octadecanoyl-2-(9Z-octadecenoyl)-sn-glycero-3-phospho-L-serine + N-(acetyl)-sphing-4-enine = 2-(9Z-octadecenoyl)-sn-glycero-3-phospho-L-serine + 1-octadecanoyl-N-(acetyl)-sphing-4-enine. The catalysed reaction is a 1,2-diacyl-sn-glycero-3-phospho-L-serine + N-(acetyl)-sphing-4-enine = 1-O-acyl-N-(acetyl)-sphing-4-enine + a 1-acyl-sn-glycero-3-phospho-L-serine. It carries out the reaction 1-octadecanoyl-2-(9Z-octadecenoyl)-sn-glycero-3-phospho-L-serine + N-(acetyl)-sphing-4-enine = 1-octadecanoyl-sn-glycero-3-phosphoserine + 1-(9Z-octadecenoyl)-N-(acetyl)-sphing-4-enine. It catalyses the reaction a 1,2-diacyl-sn-glycero-3-phospho-(1'-sn-glycerol) + N-(acetyl)-sphing-4-enine = 2-acyl-sn-glycero-3-phospho-(1'-sn-glycerol) + 1-O-acyl-N-(acetyl)-sphing-4-enine. The enzyme catalyses 1-octadecanoyl-2-(9Z-octadecenoyl)-sn-glycero-3-phospho-(1'-sn-glycerol) + N-(acetyl)-sphing-4-enine = 2-(9Z-octadecenoyl)-sn-glycero-3-phospho-(1'-sn-glycerol) + 1-octadecanoyl-N-(acetyl)-sphing-4-enine. The catalysed reaction is a 1,2-diacyl-sn-glycero-3-phospho-(1'-sn-glycerol) + N-(acetyl)-sphing-4-enine = 1-O-acyl-N-(acetyl)-sphing-4-enine + 1-acyl-sn-glycero-3-phospho-(1'-sn-glycerol). It carries out the reaction 1-octadecanoyl-2-(9Z-octadecenoyl)-sn-glycero-3-phospho-(1'-sn-glycerol) + N-(acetyl)-sphing-4-enine = 1-octadecanoyl-sn-glycero-3-phospho-(1'-sn-glycerol) + 1-(9Z-octadecenoyl)-N-(acetyl)-sphing-4-enine. It catalyses the reaction an N-acylethanolamine + a 1,2-diacyl-sn-glycero-3-phosphocholine = 2-(acylamino)ethyl fatty acid + a 2-acyl-sn-glycero-3-phosphocholine. The enzyme catalyses an N-acylethanolamine + a 1,2-diacyl-sn-glycero-3-phosphocholine = 2-(acylamino)ethyl fatty acid + a 1-acyl-sn-glycero-3-phosphocholine. The catalysed reaction is N-(5Z,8Z,11Z,14Z-eicosatetraenoyl)-ethanolamine + 1,2-di-(9Z-octadecenoyl)-sn-glycero-3-phosphocholine = 2-[(5Z,8Z,11Z,14Z)-eicosatetraenoylamino]ethyl (9Z)-octadecenoate + (9Z-octadecenoyl)-sn-glycero-3-phosphocholine. It carries out the reaction N-(9Z-octadecenoyl) ethanolamine + 1,2-di-(9Z-octadecenoyl)-sn-glycero-3-phosphocholine = 2-[(9Z)-octadecenoylamino]ethyl (9Z)-octadecenoate + (9Z-octadecenoyl)-sn-glycero-3-phosphocholine. It catalyses the reaction a 3-acyl-sn-glycerol + a 1,2-diacyl-sn-glycero-3-phosphocholine = a 1,3-diacylglycerol + a 1-acyl-sn-glycero-3-phosphocholine. The enzyme catalyses a 3-acyl-sn-glycerol + a 1,2-diacyl-sn-glycero-3-phosphocholine = a 1,3-diacylglycerol + a 2-acyl-sn-glycero-3-phosphocholine. The catalysed reaction is 3-(9Z-octadecenoyl)-sn-glycerol + 1,2-di-(9Z-octadecenoyl)-sn-glycero-3-phosphocholine = 1,3-di-(9Z-octadecenoyl)-glycerol + (9Z-octadecenoyl)-sn-glycero-3-phosphocholine. It carries out the reaction 3-hexadecanoyl-sn-glycerol + 1,2-di-(9Z-octadecenoyl)-sn-glycero-3-phosphocholine = 1-(9Z)-octadecenoyl-3-hexadecanoyl-sn-glycerol + (9Z-octadecenoyl)-sn-glycero-3-phosphocholine. It catalyses the reaction a 1-acyl-sn-glycerol + a 1,2-diacyl-sn-glycero-3-phosphocholine = a 1,3-diacylglycerol + a 2-acyl-sn-glycero-3-phosphocholine. The enzyme catalyses a 1-acyl-sn-glycerol + a 1,2-diacyl-sn-glycero-3-phosphocholine = a 1,3-diacylglycerol + a 1-acyl-sn-glycero-3-phosphocholine. The catalysed reaction is 1-(9Z-octadecenoyl)-sn-glycerol + 1,2-di-(9Z-octadecenoyl)-sn-glycero-3-phosphocholine = 1,3-di-(9Z-octadecenoyl)-glycerol + (9Z-octadecenoyl)-sn-glycero-3-phosphocholine. It carries out the reaction 1-hexadecanoyl-sn-glycerol + 1,2-di-(9Z-octadecenoyl)-sn-glycero-3-phosphocholine = 1-hexadecanoyl-3-(9Z)-octadecenoyl-sn-glycerol + (9Z-octadecenoyl)-sn-glycero-3-phosphocholine. It catalyses the reaction a 2-acylglycerol + a 1,2-diacyl-sn-glycero-3-phosphocholine = a 1,2-diacylglycerol + a 2-acyl-sn-glycero-3-phosphocholine. The enzyme catalyses a 2-acylglycerol + a 1,2-diacyl-sn-glycero-3-phosphocholine = a 1,2-diacylglycerol + a 1-acyl-sn-glycero-3-phosphocholine. The catalysed reaction is 2-hexadecanoylglycerol + 1,2-di-(9Z-octadecenoyl)-sn-glycero-3-phosphocholine = 1-(9Z)-octadecenoyl-2-hexadecanoylglycerol + (9Z-octadecenoyl)-sn-glycero-3-phosphocholine. It carries out the reaction 1-O-alkylglycerol + a 1,2-diacyl-sn-glycero-3-phosphocholine = 1-O-alkyl-3-acylglycerol + a 1-acyl-sn-glycero-3-phosphocholine. It catalyses the reaction 1-O-alkylglycerol + a 1,2-diacyl-sn-glycero-3-phosphocholine = 1-O-alkyl-3-acylglycerol + a 2-acyl-sn-glycero-3-phosphocholine. The enzyme catalyses 1-O-hexadecylglycerol + 1,2-di-(9Z-octadecenoyl)-sn-glycero-3-phosphocholine = 1-O-hexadecyl-3-(9Z)-octadecenoylglycerol + (9Z-octadecenoyl)-sn-glycero-3-phosphocholine. The catalysed reaction is 1-O-alkyl-2-acyl-sn-glycerol + a 1,2-diacyl-sn-glycero-3-phosphocholine = 1-O-alkyl-2,3-diacyl-sn-glycerol + a 2-acyl-sn-glycero-3-phosphocholine. It carries out the reaction 1-O-alkyl-2-acyl-sn-glycerol + a 1,2-diacyl-sn-glycero-3-phosphocholine = 1-O-alkyl-2,3-diacyl-sn-glycerol + a 1-acyl-sn-glycero-3-phosphocholine. It catalyses the reaction 1-O-hexadecyl-2-acetyl-sn-glycerol + 1,2-di-(9Z-octadecenoyl)-sn-glycero-3-phosphocholine = 1-O-hexadecyl-2-acetyl-3-(9Z)-octadecenoyl-sn-glycerol + (9Z-octadecenoyl)-sn-glycero-3-phosphocholine. The enzyme catalyses 1-O-hexadecyl-2-O-methyl-sn-glycerol + 1,2-di-(9Z-octadecenoyl)-sn-glycero-3-phosphocholine = 1-O-hexadecyl-2-O-methyl-3-(9Z)-octadecenoyl-sn-glycerol + (9Z-octadecenoyl)-sn-glycero-3-phosphocholine. The catalysed reaction is a 1,2-diacyl-sn-glycero-3-phosphoethanolamine + H2O = a 1-acyl-sn-glycero-3-phosphoethanolamine + a fatty acid + H(+). It carries out the reaction 1-acyl-2-(5Z,8Z,11Z,14Z)-eicosatetraenoyl-sn-glycero-3-phosphoethanolamine + H2O = a 1-acyl-sn-glycero-3-phosphoethanolamine + (5Z,8Z,11Z,14Z)-eicosatetraenoate + H(+). It catalyses the reaction a 1,2-diacyl-sn-glycero-3-phospho-(1'-sn-glycerol) + H2O = 1-acyl-sn-glycero-3-phospho-(1'-sn-glycerol) + a fatty acid + H(+). The enzyme catalyses 1-hexadecanoyl-2-(9Z-octadecenoyl)-sn-glycero-3-phospho-(1'-sn-glycerol) + H2O = 1-hexadecanoyl-sn-glycero-3-phospho-(1'-sn-glycerol) + (9Z)-octadecenoate + H(+). The catalysed reaction is a 1,2-diacyl-sn-glycero-3-phospho-(1'-sn-glycerol) + H2O = 2-acyl-sn-glycero-3-phospho-(1'-sn-glycerol) + a fatty acid + H(+). It carries out the reaction 1-hexadecanoyl-2-(9Z-octadecenoyl)-sn-glycero-3-phospho-(1'-sn-glycerol) + H2O = 2-(9Z-octadecenoyl)-sn-glycero-3-phospho-(1'-sn-glycerol) + hexadecanoate + H(+). Its activity is regulated as follows. Transacylase activity is completely inhibited by Triton X-100 and partially inhibited by heparin. Moderately activated by Mg(2+) and Ca(2+). Has dual calcium-independent phospholipase and O-acyltransferase activities with a potential role in glycerophospholipid homeostasis and remodeling of acyl groups of lipophilic alcohols present in acidic cellular compartments. Catalyzes hydrolysis of the ester bond of the fatty acyl group attached at sn-1 or sn-2 position of phospholipids (phospholipase A1 or A2 activity) and transfer it to the hydroxyl group at the first carbon of lipophilic alcohols (O-acyltransferase activity). Among preferred fatty acyl donors are phosphatidylcholines, phosphatidylethanolamines, phosphatidylglycerols and phosphatidylserines. Favors sn-2 over sn-1 deacylation of unsaturated fatty acyl groups of phosphatidylcholines, phosphatidylethanolamines, and phosphatidylglycerols. Among preferred fatty acyl acceptors are natural lipophilic alcohols including short-chain ceramide N-acetyl-sphingosine (C2 ceramide), alkylacylglycerols, monoacylglycerols, and acylethanolamides such as anandamide and oleoylethanolamide. Selectively hydrolyzes the sn-1 fatty acyl group of truncated oxidized phospholipids and may play a role in detoxification of reactive oxidized phospholipids during oxidative stress. Required for normal phospholipid degradation in alveolar macrophages with potential implications in the clearance of pulmonary surfactant, which is mainly composed of dipalmitoylphosphatidylcholine (1,2-dihexadecanoyl-sn-glycero-3-phosphocholine). Involved in the first step of bis(monoacylglycero)phosphate (BMP) de novo synthesis from phosphatidylglycerol (1,2-diacyl-sn-glycero-3-phospho-(1'-sn-glycerol), PG). BMP is an important player in cargo sorting and degradation, regulation of cellular cholesterol levels and intercellular communication. At neutral pH, hydrolyzes the sn-1 fatty acyl group of the lysophosphatidylcholines. The polypeptide is Lysosomal phospholipase A and acyltransferase (PLA2G15) (Bos taurus (Bovine)).